A 665-amino-acid chain; its full sequence is LisH domain-containing protein ARMC9 (665 aa).

One can recognise a LisH domain in the interval 7-39 (HESELLGLVKEYLDFAEFEDTLKTFLKECKIKG). Residues 204-235 (QSNKDVLQQLHQQLVEAERRSMTYLKRYNRIQ) adopt a coiled-coil conformation. At S582 the chain carries Phosphoserine. The segment covering 582–603 (SDDDEDEDDEEDHDTMEADLDK) has biased composition (acidic residues). Disordered stretches follow at residues 582–604 (SDDD…LDKD) and 636–665 (RRGT…GYPA).

Interacts with TOGARAM1, CCDC66, CEP104, CSPP1 and CEP290. Interacts with NDUFAF2.

It localises to the cytoplasm. The protein resides in the cytoskeleton. The protein localises to the cilium basal body. Its subcellular location is the cell projection. It is found in the cilium. It localises to the microtubule organizing center. The protein resides in the centrosome. The protein localises to the centriole. Functionally, involved in ciliogenesis. It is required for appropriate acetylation and polyglutamylation of ciliary microtubules, and regulation of cilium length. Acts as a positive regulator of hedgehog (Hh)signaling. May participate in the trafficking and/or retention of GLI2 and GLI3 proteins at the ciliary tip. This Bos taurus (Bovine) protein is LisH domain-containing protein ARMC9 (ARMC9).